The primary structure comprises 257 residues: Histidine/lysine/arginine/ornithine transport ATP-binding protein HisP (257 aa).

The ABC transporter domain maps to 6 to 252; it reads LNVIDLHKRY…PQSPRLQRFL (247 aa). ATP is bound by residues Ser-40, Gly-41, Gly-43, Lys-44, Ser-45, and Thr-46.

The protein belongs to the ABC transporter superfamily. As to quaternary structure, the HisPMQJ complex is composed of two ATP-binding proteins (HisP), two transmembrane proteins (HisM and HisQ) and a solute-binding protein (HisJ). The HisPMQ-ArgT complex is composed of two ATP-binding proteins (HisP), two transmembrane proteins (HisM and HisQ) and a solute-binding protein (ArgT).

It localises to the cell inner membrane. It catalyses the reaction a polar amino acid(out) + ATP + H2O = a polar amino acid(in) + ADP + phosphate + H(+). The catalysed reaction is L-histidine(out) + ATP + H2O = L-histidine(in) + ADP + phosphate + H(+). The enzyme catalyses L-lysine(out) + ATP + H2O = L-lysine(in) + ADP + phosphate + H(+). It carries out the reaction L-arginine(out) + ATP + H2O = L-arginine(in) + ADP + phosphate + H(+). It catalyses the reaction L-ornithine(out) + ATP + H2O = L-ornithine(in) + ADP + phosphate + H(+). In terms of biological role, part of the ABC transporter complex HisPMQJ involved in histidine transport. Is also part of the ABC transporter complex HisPMQ-ArgT involved in lysine/arginine/ornithine transport. Shows ATPase activity. Responsible for energy coupling to the transport system. This chain is Histidine/lysine/arginine/ornithine transport ATP-binding protein HisP, found in Escherichia coli (strain K12).